Reading from the N-terminus, the 379-residue chain is Cytoplasmic tRNA 2-thiolation protein 1 (379 aa).

This sequence belongs to the TtcA family. CTU1/NCS6/ATPBD3 subfamily.

The protein resides in the cytoplasm. It participates in tRNA modification; 5-methoxycarbonylmethyl-2-thiouridine-tRNA biosynthesis. Its function is as follows. Plays a central role in 2-thiolation of mcm(5)S(2)U at tRNA wobble positions of tRNA(Lys), tRNA(Glu) and tRNA(Gln). Directly binds tRNAs and probably acts by catalyzing adenylation of tRNAs, an intermediate required for 2-thiolation. It is unclear whether it acts as a sulfurtransferase that transfers sulfur from thiocarboxylated URM1 onto the uridine of tRNAs at wobble position. Prior mcm(5) tRNA modification by the elongator complex is required for 2-thiolation. May also be involved in protein urmylation. The sequence is that of Cytoplasmic tRNA 2-thiolation protein 1 from Lodderomyces elongisporus (strain ATCC 11503 / CBS 2605 / JCM 1781 / NBRC 1676 / NRRL YB-4239) (Yeast).